Consider the following 1039-residue polypeptide: Probable inorganic carbon transporter subunit DabA 1 (1039 aa).

Zn(2+)-binding residues include Cys462, Asp464, His721, and Cys736.

Belongs to the inorganic carbon transporter (TC 9.A.2) DabA family. As to quaternary structure, forms a complex with DabB. Zn(2+) serves as cofactor.

Its subcellular location is the cell inner membrane. Functionally, part of an energy-coupled inorganic carbon pump. In Nitrobacter hamburgensis (strain DSM 10229 / NCIMB 13809 / X14), this protein is Probable inorganic carbon transporter subunit DabA 1.